Consider the following 933-residue polypeptide: Bifunctional uridylyltransferase/uridylyl-removing enzyme (933 aa).

A uridylyltransferase region spans residues 1 to 390 (MLSTRAASAD…RLAALARRKD (390 aa)). The segment at 391-745 (VDGFVVDGER…TRIDRGRAIT (355 aa)) is uridylyl-removing. The HD domain occupies 506–628 (VDEHTLFALG…VQSPERLRLL (123 aa)). ACT domains follow at residues 746–829 (EVTI…DLTK) and 859–933 (VIEV…DPSA).

The protein belongs to the GlnD family. Requires Mg(2+) as cofactor.

It catalyses the reaction [protein-PII]-L-tyrosine + UTP = [protein-PII]-uridylyl-L-tyrosine + diphosphate. The catalysed reaction is [protein-PII]-uridylyl-L-tyrosine + H2O = [protein-PII]-L-tyrosine + UMP + H(+). With respect to regulation, uridylyltransferase (UTase) activity is inhibited by glutamine, while glutamine activates uridylyl-removing (UR) activity. Uridylylation process is dependent on ATP and 2-oxoglutarate, which are effector molecules that likely bind to PII proteins and control their activity. Functionally, modifies, by uridylylation and deuridylylation, the PII regulatory proteins GlnB and GlnZ, in response to the nitrogen status of the cell that GlnD senses through the glutamine level. Under low glutamine levels, catalyzes the conversion of the PII proteins and UTP to PII-UMP and PPi, while under higher glutamine levels, GlnD hydrolyzes PII-UMP to PII and UMP (deuridylylation). Thus, controls uridylylation state and activity of the PII proteins, and plays an important role in the regulation of nitrogen fixation and metabolism. The protein is Bifunctional uridylyltransferase/uridylyl-removing enzyme of Azospirillum brasilense.